Consider the following 526-residue polypeptide: MSYPQEVNKRRTFAIISHPDAGKTTITEKVLLYGNAIQTAGSVKGKGSSAHAKSDWMEMEKQRGISITTSVMQFPYNNCLVNLLDTPGHEDFSEDTYRTLTAVDSCLMVIDSAKGVEERTIKLIEVTRLRDTPILTFMNKLDRDIRDPMELLDEVESVLKIRCAPITWPIGCGKLFKGVYHIAKDETYLYQSGQGSTIQEVRIVKGLSSPELDAAVGDDLANQLREELELVQGASNEFDHEAFINGELTPVFFGTALGNFGVDHFLDGLTEWAPKPQARQTDVRTVESSEEKFSGFVFKIQANMDPKHRDRVAFMRVVSGKYEKGMKLKHVRIGKDVVISDALTFMAGDRAHAEEAYAGDIIGLHNHGTIQIGDTFTQGEVMKFTGIPNFAPELFRRIRLKDPLKQKQLLKGLVQLSEEGAVQVFRPLMNNDLIVGAVGVLQFDVVVSRLKTEYNVEAIYEAVNVATARWVECGDAKKFEEFKRKNEQNLALDGGDNLTYIAPTMVNLNLAQERYPDINFFKTREH.

Positions 8–277 (NKRRTFAIIS…GLTEWAPKPQ (270 aa)) constitute a tr-type G domain. Residues 17–24 (SHPDAGKT), 85–89 (DTPGH), and 139–142 (NKLD) each bind GTP.

It belongs to the TRAFAC class translation factor GTPase superfamily. Classic translation factor GTPase family. PrfC subfamily.

Its subcellular location is the cytoplasm. In terms of biological role, increases the formation of ribosomal termination complexes and stimulates activities of RF-1 and RF-2. It binds guanine nucleotides and has strong preference for UGA stop codons. It may interact directly with the ribosome. The stimulation of RF-1 and RF-2 is significantly reduced by GTP and GDP, but not by GMP. The polypeptide is Peptide chain release factor 3 (Actinobacillus pleuropneumoniae serotype 5b (strain L20)).